Here is a 554-residue protein sequence, read N- to C-terminus: Rab GTPase-binding effector protein 2 (554 aa).

Disordered regions lie at residues 1 to 28 (MAAAPATLALDPQPQEKQKDASESSELS), 167 to 208 (IQRR…GPAA), and 371 to 395 (GLRAEQLPSSALQGSEQREDQDEAL). The segment covering 14-28 (PQEKQKDASESSELS) has biased composition (basic and acidic residues). Residues 15-173 (QEKQKDASES…IQEIQRRPRQ (159 aa)) adopt a coiled-coil conformation. A phosphoserine mark is found at Ser-176, Ser-180, Ser-187, and Ser-191. The stretch at 274-509 (DSQWEQLQVE…QAELETSEQV (236 aa)) forms a coiled coil.

The protein belongs to the rabaptin family. As to quaternary structure, heterodimer with RABGEF1. The dimer binds RAB5A that has been activated by GTP-binding. Interacts with SDCCAG8; this interaction is important for ciliogenesis regulation. Interacts with RAB4A; this interaction may mediate VEGFR2 cell surface expression.

It localises to the cytoplasm. It is found in the early endosome. The protein resides in the cytoskeleton. Its subcellular location is the microtubule organizing center. The protein localises to the centrosome. It localises to the cilium basal body. In terms of biological role, plays a role in membrane trafficking and in homotypic early endosome fusion. Participates in arteriogenesis by regulating vascular endothelial growth factor receptor 2/VEGFR2 cell surface expression and endosomal trafficking. By interacting with SDCCAG8, localizes to centrosomes and plays a critical role in ciliogenesis. The protein is Rab GTPase-binding effector protein 2 (Rabep2) of Mus musculus (Mouse).